The chain runs to 441 residues: Probable magnesium transporter NIPA8 (441 aa).

At 1 to 4 (MGEW) the chain is on the extracellular side. A helical transmembrane segment spans residues 5-25 (VIGAFINIFGSVAINFGTNLL). The Cytoplasmic segment spans residues 26–56 (KLGHNERERLALQDGGGKMPLKPIIHNQTWR). A helical membrane pass occupies residues 57–77 (VGILVFLLGNCLNFISFGYAA). Topologically, residues 78 to 79 (QS) are extracellular. Residues 80 to 100 (LLAALGSIQFVSNIAFAYVVL) traverse the membrane as a helical segment. At 101–105 (NKMVT) the chain is on the cytoplasmic side. A helical membrane pass occupies residues 106-126 (VKVLVATAFIVLGNVFLVAFG). Over 127 to 144 (NHQSPVFTPEQLAEKYSN) the chain is Extracellular. Residues 145 to 165 (VTFLVYCGILILIVAVHHFLY) form a helical membrane-spanning segment. The Cytoplasmic portion of the chain corresponds to 166–184 (RKGEVLISTPGQEISSYWK). Residues 185-205 (MLLPFSYAVVSGAIGSCSVLF) form a helical membrane-spanning segment. The Extracellular segment spans residues 206-222 (AKSLSNLLRLAMSSSYQ). The helical transmembrane segment at 223-243 (LHSWFTYSMLLLFLSTAGFWM) threads the bilayer. At 244–255 (TRLNEGLSLYDA) the chain is on the cytoplasmic side. A helical membrane pass occupies residues 256–276 (ILIVPMFQIAWTFFSICTGCI). At 277-288 (YFQEFQVFDALR) the chain is on the extracellular side. A helical membrane pass occupies residues 289–309 (TTMFILGMMCVFIGISLLAPD). The Cytoplasmic segment spans residues 310–441 (DTRGNETKDN…MLEKTISSKA (132 aa)). Residues 313-347 (GNETKDNSSSLDSIVSSSVPTEEDRLIPQSSEDGH) form a disordered region. The segment covering 320 to 330 (SSSLDSIVSSS) has biased composition (low complexity). The segment covering 334–347 (EEDRLIPQSSEDGH) has biased composition (basic and acidic residues).

The protein belongs to the NIPA (TC 2.A.7) family. In terms of assembly, homodimer.

Its subcellular location is the cell membrane. The protein resides in the early endosome. In terms of biological role, acts as a Mg(2+) transporter. Can also transport other divalent cations such as Fe(2+), Sr(2+), Ba(2+), Mn(2+) and Co(2+) but to a much less extent than Mg(2+). This Arabidopsis thaliana (Mouse-ear cress) protein is Probable magnesium transporter NIPA8.